A 1482-amino-acid polypeptide reads, in one-letter code: Chromosome partition protein MukB (1482 aa).

Residue 34–41 (GGNGAGKS) participates in ATP binding. Coiled coils occupy residues 326–416 (LEAD…AIQY), 509–603 (RHLA…RAPV), 780–805 (RAAR…ATLS), 835–923 (EAEI…AKLE), 979–1116 (LSGN…AKAG), and 1210–1265 (EAIE…LQSV). The segment at 666 to 783 (PGGAEDSRLN…TLPLFGRAAR (118 aa)) is flexible hinge.

It belongs to the SMC family. MukB subfamily. In terms of assembly, homodimerization via its hinge domain. Binds to DNA via its C-terminal region. Interacts, and probably forms a ternary complex, with MukE and MukF via its C-terminal region. The complex formation is stimulated by calcium or magnesium. Interacts with tubulin-related protein FtsZ.

The protein localises to the cytoplasm. The protein resides in the nucleoid. Plays a central role in chromosome condensation, segregation and cell cycle progression. Functions as a homodimer, which is essential for chromosome partition. Involved in negative DNA supercoiling in vivo, and by this means organize and compact chromosomes. May achieve or facilitate chromosome segregation by condensation DNA from both sides of a centrally located replisome during cell division. This Enterobacter sp. (strain 638) protein is Chromosome partition protein MukB.